We begin with the raw amino-acid sequence, 344 residues long: Methionine import ATP-binding protein MetN (344 aa).

Positions 2 to 241 constitute an ABC transporter domain; that stretch reads IEINQVNKVF…PKTELAHDFI (240 aa). 38–45 contributes to the ATP binding site; the sequence is GSSGAGKS.

The protein belongs to the ABC transporter superfamily. Methionine importer (TC 3.A.1.24) family. The complex is composed of two ATP-binding proteins (MetN), two transmembrane proteins (MetI) and a solute-binding protein (MetQ).

It is found in the cell inner membrane. The catalysed reaction is L-methionine(out) + ATP + H2O = L-methionine(in) + ADP + phosphate + H(+). It catalyses the reaction D-methionine(out) + ATP + H2O = D-methionine(in) + ADP + phosphate + H(+). Part of the ABC transporter complex MetNIQ involved in methionine import. Responsible for energy coupling to the transport system. This chain is Methionine import ATP-binding protein MetN, found in Vibrio vulnificus (strain YJ016).